A 248-amino-acid chain; its full sequence is Tyrosine recombinase XerD-like (248 aa).

The region spanning 1–72 is the Core-binding (CB) domain; the sequence is MKSYIEPFIA…TANQFLYYLY (72 aa). Residues 85–248 enclose the Tyr recombinase domain; the sequence is DTMKVMRTEK…PVTLEKYYKS (164 aa). Active-site residues include Lys149 and Arg213. Tyr245 acts as the O-(3'-phospho-DNA)-tyrosine intermediate in catalysis.

Belongs to the 'phage' integrase family. XerD-like subfamily.

The protein localises to the cytoplasm. Putative tyrosine recombinase. Not involved in the cutting and rejoining of the recombining DNA molecules on dif(SL) site. This is Tyrosine recombinase XerD-like from Streptococcus pyogenes serotype M18 (strain MGAS8232).